A 368-amino-acid polypeptide reads, in one-letter code: N-acetylneuraminate epimerase 2 (368 aa).

Positions 1–19 are cleaved as a signal peptide; that stretch reads MNKTITALAILMASFAANA. 7 Kelch repeats span residues 40 to 84, 86 to 137, 139 to 173, 174 to 219, 222 to 265, 287 to 336, and 338 to 367; these read TVYI…AFID, NLYV…FVHN, KAYV…KINA, YYFD…VNKG, TWLI…VAGG, ENYQ…LWNN, and LLII…VTVQ. Residue Glu228 is the Proton acceptor of the active site.

The protein belongs to the NanM family. In terms of assembly, homodimer.

It localises to the periplasm. The enzyme catalyses N-acetyl-alpha-neuraminate = N-acetyl-beta-neuraminate. Functionally, converts alpha-N-acetylneuranimic acid (Neu5Ac) to the beta-anomer, accelerating the equilibrium between the alpha- and beta-anomers. Probably facilitates sialidase-negative bacteria to compete successfully for limited amounts of extracellular Neu5Ac, which is likely taken up in the beta-anomer. In addition, the rapid removal of sialic acid from solution might be advantageous to the bacterium to damp down host responses. The chain is N-acetylneuraminate epimerase 2 from Escherichia coli O6:H1 (strain CFT073 / ATCC 700928 / UPEC).